The chain runs to 379 residues: uncharacterized protein (379 aa).

The chain crosses the membrane as a helical span at residues 7 to 27 (VYIFAGIFLFIALIILIKIFF).

It is found in the membrane. This is an uncharacterized protein from Caenorhabditis elegans.